The chain runs to 327 residues: Ribosomal RNA small subunit methyltransferase H (327 aa).

S-adenosyl-L-methionine contacts are provided by residues 36–38 (GGH), Asp61, Phe88, Asp114, and Gln121.

It belongs to the methyltransferase superfamily. RsmH family.

Its subcellular location is the cytoplasm. The enzyme catalyses cytidine(1402) in 16S rRNA + S-adenosyl-L-methionine = N(4)-methylcytidine(1402) in 16S rRNA + S-adenosyl-L-homocysteine + H(+). Its function is as follows. Specifically methylates the N4 position of cytidine in position 1402 (C1402) of 16S rRNA. The chain is Ribosomal RNA small subunit methyltransferase H from Chlorobium phaeovibrioides (strain DSM 265 / 1930) (Prosthecochloris vibrioformis (strain DSM 265)).